The following is a 636-amino-acid chain: Sodium-dependent nutrient amino acid transporter 1 (636 aa).

The tract at residues 1–40 (MELKTMPQNGANNGNPQGNTSNNNNTNDSSNSNSNNNNKT) is disordered. Topologically, residues 1 to 50 (MELKTMPQNGANNGNPQGNTSNNNNTNDSSNSNSNNNNKTERTNWSNGLE) are cytoplasmic. The segment covering 7–40 (PQNGANNGNPQGNTSNNNNTNDSSNSNSNNNNKT) has biased composition (low complexity). 3 helical membrane-spanning segments follow: residues 51–71 (FLMS…FPFT), 78–98 (GAFL…MYYL), and 131–151 (TICI…YLAV). N-linked (GlcNAc...) asparagine glycosylation occurs at N184. Transmembrane regions (helical) follow at residues 225-245 (PDWK…LVIM), 254-274 (AAYF…GRAV), 303-323 (AVVQ…MFSS), 337-357 (IVTT…FAIL), 397-417 (LFSA…IVAL), 436-456 (VALV…TPGG), 469-489 (TYVV…IYGV), 511-531 (CWLI…MVTI), and 547-567 (VAGW…GWWY).

Belongs to the sodium:neurotransmitter symporter (SNF) (TC 2.A.22) family.

The protein localises to the membrane. Functionally, unusual broad substrate spectrum amino acid:sodium cotransporter that promotes absorption of the D isomers of essential amino acids. Neutral amino acids are the preferred substrates, especially methionine and phenylalanine. The sequence is that of Sodium-dependent nutrient amino acid transporter 1 from Drosophila grimshawi (Hawaiian fruit fly).